A 349-amino-acid chain; its full sequence is Protein RecA (349 aa).

65 to 72 contacts ATP; the sequence is GPESSGKT.

This sequence belongs to the RecA family.

It is found in the cytoplasm. Its function is as follows. Can catalyze the hydrolysis of ATP in the presence of single-stranded DNA, the ATP-dependent uptake of single-stranded DNA by duplex DNA, and the ATP-dependent hybridization of homologous single-stranded DNAs. It interacts with LexA causing its activation and leading to its autocatalytic cleavage. This is Protein RecA from Clostridium acetobutylicum (strain ATCC 824 / DSM 792 / JCM 1419 / IAM 19013 / LMG 5710 / NBRC 13948 / NRRL B-527 / VKM B-1787 / 2291 / W).